The primary structure comprises 454 residues: SH2 domain-containing protein 4A (454 aa).

Disordered stretches follow at residues 45–65 (AMER…NGKS), 107–131 (EQEA…KSQY), 152–177 (KEEL…SSSS), and 237–302 (RKSK…AYPQ). The span at 107–120 (EQEAEEPRKTHSEE) shows a compositional bias: basic and acidic residues. Phosphoserine is present on residues Ser-118 and Ser-124. The span at 240 to 259 (KAADEKRRSLAKQAREDYKR) shows a compositional bias: basic and acidic residues. Residues Ser-261 and Ser-315 each carry the phosphoserine modification. Positions 347 to 440 (WFHGILTLKK…LGKELLLYPC (94 aa)) constitute an SH2 domain.

In terms of assembly, interacts with ESR1. Ubiquitously expressed. Aberrantly expressed in some cancers.

The protein resides in the cytoplasm. In terms of biological role, inhibits estrogen-induced cell proliferation by competing with PLCG for binding to ESR1, blocking the effect of estrogen on PLCG and repressing estrogen-induced proliferation. May play a role in T-cell development and function. The chain is SH2 domain-containing protein 4A (SH2D4A) from Homo sapiens (Human).